The sequence spans 188 residues: MKLSVVALAALVSVAAAQGVSELPKCAQDCASKGFPSSCGADVKCVCTSNSFLDAITCCVATTCTAEEQKKTIQFAKGICGGVGVNVPDSAVCPTGGSSSSGSASSTPTSSGGSSSETGSVTGTAITGTNSPTPTSRRPSGSSTAHSSGSGSPATSTGAPTQTGNAAASVNANGGLLAAIAALVIAVA.

The first 17 residues, 1 to 17 (MKLSVVALAALVSVAAA), serve as a signal peptide directing secretion. The region spanning 18–107 (QGVSELPKCA…SSSSGSASST (90 aa)) is the CFEM domain. 4 cysteine pairs are disulfide-bonded: Cys-26-Cys-64, Cys-30-Cys-59, Cys-39-Cys-45, and Cys-47-Cys-80. Asp-42 serves as a coordination point for heme. The interval 95–163 (TGGSSSSGSA…ATSTGAPTQT (69 aa)) is disordered. Asn-165 is lipidated: GPI-anchor amidated asparagine. Positions 166-188 (AAASVNANGGLLAAIAALVIAVA) are cleaved as a propeptide — removed in mature form.

It belongs to the RBT5 family. In terms of processing, the GPI-anchor is attached to the protein in the endoplasmic reticulum and serves to target the protein to the cell surface. There, the glucosamine-inositol phospholipid moiety is cleaved off and the GPI-modified mannoprotein is covalently attached via its lipidless GPI glycan remnant to the 1,6-beta-glucan of the outer cell wall layer.

The protein resides in the secreted. It is found in the cell wall. Its subcellular location is the cell membrane. GPI-anchored cell wall protein involved in stabilizing the cell wall. The sequence is that of GPI-anchored hemophore ARB_01017 from Arthroderma benhamiae (strain ATCC MYA-4681 / CBS 112371) (Trichophyton mentagrophytes).